The chain runs to 226 residues: Endonuclease V (226 aa).

Residues Asp43 and Asp108 each contribute to the Mg(2+) site.

This sequence belongs to the endonuclease V family. Mg(2+) serves as cofactor.

It is found in the cytoplasm. It catalyses the reaction Endonucleolytic cleavage at apurinic or apyrimidinic sites to products with a 5'-phosphate.. Functionally, DNA repair enzyme involved in the repair of deaminated bases. Selectively cleaves double-stranded DNA at the second phosphodiester bond 3' to a deoxyinosine leaving behind the intact lesion on the nicked DNA. The chain is Endonuclease V from Thermosipho melanesiensis (strain DSM 12029 / CIP 104789 / BI429).